Consider the following 705-residue polypeptide: Choline transporter-like protein 2 (705 aa).

The Cytoplasmic segment spans residues 1-31 (MEDQRKYGAYGTPQKYDPTFKGPIYNRGCTD). A Phosphothreonine modification is found at T12. Residues 32-52 (VLCCVLLFLAIVGYVAVGLIA) form a helical membrane-spanning segment. The Extracellular portion of the chain corresponds to 53–231 (WTHGDPRKVI…RIFEDYTVSW (179 aa)). N186 and N199 each carry an N-linked (GlcNAc...) asparagine glycan. A helical transmembrane segment spans residues 232 to 252 (YWIVIGLVIAMVLSLLFIILL). Topologically, residues 253 to 255 (RFL) are cytoplasmic. A helical membrane pass occupies residues 256-276 (AGIMVWVMIVLVILVLGYGIF). Topologically, residues 277–314 (HCYMEYARLRGEAGSDISVLDLGFQTDFRVYLHLRQTW) are extracellular. The chain crosses the membrane as a helical span at residues 315–335 (LAFMIILSILEVIIILLLIFL). The Cytoplasmic portion of the chain corresponds to 336–363 (RKRILIAIALIKEASRAVGYVMCSLLYP). Residues 364-384 (LVTFFLLCLCIAYWASTAVFL) traverse the membrane as a helical segment. The Extracellular segment spans residues 385-455 (STSNEAVYKI…IFNAFMFFWL (71 aa)). N414 carries an N-linked (GlcNAc...) asparagine glycan. A helical membrane pass occupies residues 456 to 478 (ANFVLALGQVTLAGAFASYYWAL). At 479 to 503 (RKPDDMPAFPLFAAFGRALRYHTGS) the chain is on the cytoplasmic side. Residues 504–524 (LAFGSLILAIVQIIRVILEYL) traverse the membrane as a helical segment. The Extracellular portion of the chain corresponds to 525-562 (DQRLKAAENKFAKFLMTCLKCCFWCLEKFIKFLNRNAY). A helical membrane pass occupies residues 563–583 (IMIAIYGTNFCTSARNAFFLL). Over 584 to 598 (MRNIIRVAVLDKVTD) the chain is Cytoplasmic. The helical transmembrane segment at 599–619 (FLFLLGKLLIVGSVGILAFFF) threads the bilayer. Over 620–637 (FTHRIRIVQDTAPPLNYY) the chain is Extracellular. Residues 638–658 (WVPILTVIVGSYLIAHGFFSV) form a helical membrane-spanning segment. Topologically, residues 659–705 (YGMCVDTLFLCFLEDLERNNGSSERPYFMSSTLKKLLNKTNKKPVES) are cytoplasmic.

It belongs to the CTL (choline transporter-like) family. Interacts with COCH. In terms of processing, N-glycosylated; contains sialic acid. Not O-glycosylated. As to expression, expressed at high levels in lung, colon and in supporting cells of the inner ear (at protein level). Progressively lower levels in brain, tongue, liver and kidney (at protein level). In the tongue, strongly expressed in epithelial cells and in nerves within the musculature. Within the nerves, expression observed in the perineurial cells of the nerve sheath, in the Schwann cells and myelinated nerve fibers (at protein level). In the kidney, prominent expression in glomeruli in the lining of Bowman's capsule and on the mesangial cells adjacent to the vessels within the glomerulus (at protein level). Strongly expressed on the membranes of splenocytes (at protein level).

It is found in the cell membrane. Its subcellular location is the mitochondrion outer membrane. It catalyses the reaction choline(out) + n H(+)(in) = choline(in) + n H(+)(out). The catalysed reaction is ethanolamine(out) + n H(+)(in) = ethanolamine(in) + n H(+)(out). Functionally, choline/H+ antiporter, mainly in mitochodria. Also acts as a low-affinity ethanolamine/H+ antiporter, regulating the supply of extracellular ethanolamine (Etn) for the CDP-Etn pathway, redistribute intracellular Etn and balance the CDP-Cho and CDP-Etn arms of the Kennedy pathway. The polypeptide is Choline transporter-like protein 2 (SLC44A2) (Cavia porcellus (Guinea pig)).